We begin with the raw amino-acid sequence, 473 residues long: Cell division protein FtsP (473 aa).

The tat-type signal signal peptide spans 1-27; sequence MSFSRRQFLQASGLAVCLGSLSSSVRA.

It belongs to the FtsP family. In terms of processing, predicted to be exported by the Tat system. The position of the signal peptide cleavage has not been experimentally proven.

The protein resides in the periplasm. In terms of biological role, cell division protein that is required for growth during stress conditions. May be involved in protecting or stabilizing the divisomal assembly under conditions of stress. In Proteus mirabilis (strain HI4320), this protein is Cell division protein FtsP.